Reading from the N-terminus, the 169-residue chain is Acetolactate synthase small subunit (169 aa).

An ACT domain is found at 8–85; it reads TLSVLVEDTP…KVVEQEADNS (78 aa).

Belongs to the acetolactate synthase small subunit family. As to quaternary structure, dimer of large and small chains.

It carries out the reaction 2 pyruvate + H(+) = (2S)-2-acetolactate + CO2. It participates in amino-acid biosynthesis; L-isoleucine biosynthesis; L-isoleucine from 2-oxobutanoate: step 1/4. It functions in the pathway amino-acid biosynthesis; L-valine biosynthesis; L-valine from pyruvate: step 1/4. This Mycobacterium leprae (strain TN) protein is Acetolactate synthase small subunit (ilvH).